The primary structure comprises 183 residues: Apo-citrate lyase phosphoribosyl-dephospho-CoA transferase (183 aa).

The protein belongs to the CitX family.

The catalysed reaction is apo-[citrate lyase ACP] + 2'-(5''-triphospho-alpha-D-ribosyl)-3'-dephospho-CoA = holo-[citrate lyase ACP] + diphosphate. Its function is as follows. Transfers 2-(5''-triphosphoribosyl)-3'-dephosphocoenzyme-A on a serine residue to the apo-acyl carrier protein (gamma chain) of the citrate lyase to yield holo-acyl carrier protein. In Escherichia coli (strain SMS-3-5 / SECEC), this protein is Apo-citrate lyase phosphoribosyl-dephospho-CoA transferase.